The primary structure comprises 520 residues: Cytochrome P450 monooxygenase 176 (520 aa).

Asn-6 carries N-linked (GlcNAc...) asparagine glycosylation. The chain crosses the membrane as a helical span at residues 10–27 (LLVVAGALFLTFLTTRFI). Residues Asn-141 and Asn-270 are each glycosylated (N-linked (GlcNAc...) asparagine). A heme-binding site is contributed by Cys-445. Asn-517 carries an N-linked (GlcNAc...) asparagine glycan.

Belongs to the cytochrome P450 family. It depends on heme as a cofactor.

The protein resides in the membrane. Its pathway is secondary metabolite biosynthesis. Functionally, cytochrome P450 monooxygenase that is able to use delta(6)-protoilludene as a substrate to produce delta(6)-protoilludene-5-ol and an unidentified hydroxyprotoilludene. Is also able to use phenanthrene as a substrate for oxidation. The polypeptide is Cytochrome P450 monooxygenase 176 (Postia placenta (strain ATCC 44394 / Madison 698-R) (Brown rot fungus)).